Here is a 206-residue protein sequence, read N- to C-terminus: CBS domain-containing protein CBSX3, mitochondrial (206 aa).

A mitochondrion-targeting transit peptide spans 1-39 (MQGVIRSFVSGGNVVKGSVLQHLRVINPAIQPSVFCSRS). CBS domains follow at residues 61-127 (MKSK…GRSS) and 136-194 (MTEE…HREE).

It is found in the mitochondrion. This is CBS domain-containing protein CBSX3, mitochondrial (CBSX3) from Arabidopsis thaliana (Mouse-ear cress).